Consider the following 493-residue polypeptide: Cytochrome P450 monooxygenase mfmF (493 aa).

2 helical membrane-spanning segments follow: residues 3-23 (SLIP…RLFF) and 301-321 (VLFA…FHLV). Cys-440 contributes to the heme binding site.

The protein belongs to the cytochrome P450 family. Heme serves as cofactor.

The protein resides in the membrane. It participates in secondary metabolite biosynthesis; terpenoid biosynthesis. In terms of biological role, cytochrome P450 monooxygenase; part of the gene cluster that mediates the biosynthesis of the phthalide-terpenoid hybrid 11'-O-desmethylfendlerol. Within the pathway, mfmF catalyzes C-3 hydroxylation of 5-hydroxy-4-(hydroxymethyl)-7-methoxy-6-methylphthalide to yield cyclopolic acid. The biosynthesis of 11'-O-desmethylfendlerol begins with the NR-PKS mfmB that forms 3,5-dimethylorsellinic acid (DMOA), which is then transformed into the phthalide 5,7-dihydroxy-4-(hydroxymethyl)-6-methylphthalide by the cytochrome P450 monooxygenase mfmA and the hydrolase mfmC. Subsequently, the methyltransferase mfmE catalyzes 7-O-methylation to yield 5-hydroxy-4-(hydroxymethyl)-7-methoxy-6-methylphthalide, which undergoes C-3 hydroxylation by the cytochrome P450 monooxygenase mfmF. The resultant cyclopolic acid (2,5-dihydroxy-4-(hydroxymethyl)-7-methoxy-6-methylphthalide) is then farnesylated by the DMATS-type prenyltransferase mfmD to afford 5-O-farnesylcyclopolic acid. Finally, the Pyr4-family terpene cyclase mfmH cyclizes the farnesyl moiety of 5-O-farnesylcyclopolic acid into a drimane-like structure, thus completing the biosynthesis of 11'-O-desmethylfendlerol. The chain is Cytochrome P450 monooxygenase mfmF from Annulohypoxylon moriforme (Filamentous fungus).